The following is a 369-amino-acid chain: Glutamine synthetase 2 cytoplasmic (369 aa).

Residues 32-112 form the GS beta-grasp domain; sequence VQATYVWIDG…VMCDTYKFDG (81 aa). The region spanning 119-369 is the GS catalytic domain; it reads KRKTCLEVAN…AILRTICLDE (251 aa).

It belongs to the glutamine synthetase family. As to quaternary structure, homooctamer.

It is found in the cytoplasm. It carries out the reaction L-glutamate + NH4(+) + ATP = L-glutamine + ADP + phosphate + H(+). This is Glutamine synthetase 2 cytoplasmic (Gs2) from Drosophila melanogaster (Fruit fly).